The sequence spans 883 residues: N,N'-diacetylchitobiase (883 aa).

Residues 1 to 17 form the signal peptide; it reads MLKHSLIAASVITTLAG. Cysteine 18 carries the N-palmitoyl cysteine lipid modification. Residue cysteine 18 is the site of S-diacylglycerol cysteine attachment. 3 disulfides stabilise this stretch: cysteine 54–cysteine 64, cysteine 394–cysteine 402, and cysteine 502–cysteine 577. The Proton donor role is filled by glutamate 537.

Belongs to the glycosyl hydrolase 20 family. Post-translationally, this protein is probably a lipoprotein, its processing is inhibited by globomycin.

Its subcellular location is the cell outer membrane. It catalyses the reaction Hydrolysis of terminal non-reducing N-acetyl-D-hexosamine residues in N-acetyl-beta-D-hexosaminides.. Its pathway is glycan degradation; chitin degradation. Functionally, hydrolysis of terminal, non-reducing N-acetyl-beta-D-glucosamine residues in chitobiose and higher analogs, and in glycoproteins. The chain is N,N'-diacetylchitobiase (chb) from Vibrio harveyi (Beneckea harveyi).